Here is a 194-residue protein sequence, read N- to C-terminus: Phosphoheptose isomerase (194 aa).

An SIS domain is found at 37–194 (ISNSFKQGGK…LIEFEMAKQA (158 aa)). A substrate-binding site is contributed by 52-54 (NGG). Positions 61 and 65 each coordinate Zn(2+). Residues Glu65, 93 to 94 (ND), 119 to 121 (STS), Ser124, and Gln172 each bind substrate. 2 residues coordinate Zn(2+): Gln172 and His180.

This sequence belongs to the SIS family. GmhA subfamily. Homotetramer. Zn(2+) serves as cofactor.

The protein resides in the cytoplasm. The enzyme catalyses 2 D-sedoheptulose 7-phosphate = D-glycero-alpha-D-manno-heptose 7-phosphate + D-glycero-beta-D-manno-heptose 7-phosphate. Its pathway is carbohydrate biosynthesis; D-glycero-D-manno-heptose 7-phosphate biosynthesis; D-glycero-alpha-D-manno-heptose 7-phosphate and D-glycero-beta-D-manno-heptose 7-phosphate from sedoheptulose 7-phosphate: step 1/1. In terms of biological role, catalyzes the isomerization of sedoheptulose 7-phosphate in D-glycero-D-manno-heptose 7-phosphate. The polypeptide is Phosphoheptose isomerase (Haemophilus influenzae (strain PittEE)).